The sequence spans 244 residues: MIIMYAIGIGDNKEEVLKAYEKLKEEGIEVELIDNPKLLVDKLLDGEIDGAVRGSLSSSKVILYLRERIGKFYRASILKNPFTNGIFLLSPVGIDDISEDKNERIKDKIRIIEFASNFLKNYNIKAKVAVLSGGRLGDLGRNKVVDETIYEAEEIVEHFKGNVDIIHNGILIEEYLKDGYNIIIAVDGITGNLIFRCLGLICKIPGYGAVILSDKNVNFIDTSRNANWERYYNAIKFLIGGDFG.

This sequence belongs to the MtxX family.

This is an uncharacterized protein from Methanocaldococcus jannaschii (strain ATCC 43067 / DSM 2661 / JAL-1 / JCM 10045 / NBRC 100440) (Methanococcus jannaschii).